The following is a 139-amino-acid chain: MATMQCDVVSVKESIYSGQVTMLIAKGAGGELGILPGHAPLVTLLQPGPIRVQLENGTEEIVYVSGGVLEVQPHVVTVLADTAIRADNLDEAAILEARKNAEQLLANQKSDLDSAAALASLSEISGQLETIRKIKNRAL.

This sequence belongs to the ATPase epsilon chain family. As to quaternary structure, F-type ATPases have 2 components, CF(1) - the catalytic core - and CF(0) - the membrane proton channel. CF(1) has five subunits: alpha(3), beta(3), gamma(1), delta(1), epsilon(1). CF(0) has three main subunits: a, b and c.

The protein localises to the cell inner membrane. Its function is as follows. Produces ATP from ADP in the presence of a proton gradient across the membrane. The chain is ATP synthase epsilon chain from Acinetobacter baylyi (strain ATCC 33305 / BD413 / ADP1).